The sequence spans 336 residues: Phospho-N-acetylmuramoyl-pentapeptide-transferase (336 aa).

The next 10 membrane-spanning stretches (helical) occupy residues 3–23, 53–73, 78–98, 118–138, 143–163, 174–194, 200–220, 226–246, 254–274, and 316–336; these read LTLI…PYFI, GGTV…LFSI, SLAL…IGFL, LALQ…PSGI, VFGY…FWVV, GIDG…GVIA, FDVL…FCFN, VFMG…ISIA, LIIG…VFYF, and AFLW…LYVF.

This sequence belongs to the glycosyltransferase 4 family. MraY subfamily. It depends on Mg(2+) as a cofactor.

Its subcellular location is the cell membrane. It carries out the reaction UDP-N-acetyl-alpha-D-muramoyl-L-alanyl-gamma-D-glutamyl-L-lysyl-D-alanyl-D-alanine + di-trans,octa-cis-undecaprenyl phosphate = Mur2Ac(oyl-L-Ala-gamma-D-Glu-L-Lys-D-Ala-D-Ala)-di-trans,octa-cis-undecaprenyl diphosphate + UMP. It functions in the pathway cell wall biogenesis; peptidoglycan biosynthesis. Its function is as follows. Catalyzes the initial step of the lipid cycle reactions in the biosynthesis of the cell wall peptidoglycan: transfers peptidoglycan precursor phospho-MurNAc-pentapeptide from UDP-MurNAc-pentapeptide onto the lipid carrier undecaprenyl phosphate, yielding undecaprenyl-pyrophosphoryl-MurNAc-pentapeptide, known as lipid I. The chain is Phospho-N-acetylmuramoyl-pentapeptide-transferase from Streptococcus pyogenes serotype M18 (strain MGAS8232).